Consider the following 741-residue polypeptide: Catalase-peroxidase 2 (741 aa).

A signal peptide spans 1–28 (MQKKRIGKSVVAALAIIAMSAGTVAAWA). Residues 107–228 (WHGAGTYRTY…LAATQMGLIY (122 aa)) constitute a cross-link (tryptophyl-tyrosyl-methioninium (Trp-Tyr) (with M-254)). Catalysis depends on His108, which acts as the Proton acceptor. The segment at residues 228–254 (YVNPEGPNGNPDPVAAAKDIREAFGRM) is a cross-link (tryptophyl-tyrosyl-methioninium (Tyr-Met) (with W-107)). Residue His269 coordinates heme b.

The protein belongs to the peroxidase family. Peroxidase/catalase subfamily. As to quaternary structure, homodimer or homotetramer. Heme b serves as cofactor. Post-translationally, formation of the three residue Trp-Tyr-Met cross-link is important for the catalase, but not the peroxidase activity of the enzyme.

It carries out the reaction H2O2 + AH2 = A + 2 H2O. The catalysed reaction is 2 H2O2 = O2 + 2 H2O. Functionally, bifunctional enzyme with both catalase and broad-spectrum peroxidase activity. This chain is Catalase-peroxidase 2, found in Burkholderia ambifaria (strain MC40-6).